The sequence spans 263 residues: Lens fiber major intrinsic protein (263 aa).

At 1–12 the chain is on the cytoplasmic side; the sequence is MWELRSASFWRA. The chain crosses the membrane as a helical span at residues 13–30; it reads IFAEFFATLFYVFFGLGA. The Extracellular segment spans residues 31–40; the sequence is SLRWAPGPLH. The helical transmembrane segment at 41–59 threads the bilayer; the sequence is VLQVALAFGLALATLVQAV. The Cytoplasmic segment spans residues 60–63; the sequence is GHIS. Residues 64–76 constitute an intramembrane region (discontinuously helical); sequence GAHVNPAVTFAFL. Residues 68-70 carry the NPA 1 motif; sequence NPA. The Cytoplasmic segment spans residues 77–85; that stretch reads VGSQMSLLR. A helical membrane pass occupies residues 86 to 106; it reads AICYVVAQLLGAVAGAAVLYS. The Extracellular portion of the chain corresponds to 107–126; sequence VTPPAVRGNLALNTLHPGVS. Residues 127–147 traverse the membrane as a helical segment; sequence VGQATIVEIFLTLQFVLCIFA. The Cytoplasmic portion of the chain corresponds to 148 to 157; sequence TYDERRNGRL. A helical membrane pass occupies residues 158 to 175; that stretch reads GSVALAVGFSLTLGHLFG. Over 176–177 the chain is Extracellular; it reads MY. The segment at residues 178–193 is an intramembrane region (discontinuously helical); that stretch reads YTGAGMNPARSFAPAI. The short motif at 184-186 is the NPA 2 element; that stretch reads NPA. The Extracellular segment spans residues 194-200; sequence LTRNFTN. A helical membrane pass occupies residues 201–218; it reads HWVYWVGPVIGAGLGSLL. Topologically, residues 219 to 263 are cytoplasmic; that stretch reads YDFLLFPRLKSVSERLSILKGTRPSESNGQPEVTGEPVELKTQAL. The segment at 227–237 is interaction with CALM; sequence LKSVSERLSIL. A phosphoserine mark is found at Ser-235, Ser-243, and Ser-245. A disordered region spans residues 240–263; the sequence is TRPSESNGQPEVTGEPVELKTQAL.

It belongs to the MIP/aquaporin (TC 1.A.8) family. In terms of assembly, homotetramer; each monomer provides an independent water pore. Two homotetramers on opposing membranes can dimerize, forming a cell-cell junction. Interacts with CALM; the calcium-calmodulin/CALM complex interacts with the cytoplasmic domains of two aquaporins, leading to channel closure. Interacts with BFSP1 (via C-terminus); prevents calcium-dependent inhibition of the water channel activity. Post-translationally, subject to partial proteolytic cleavage in the eye lens core. Partial proteolysis promotes interactions between tetramers from adjoining membranes. Fatty acylated at Met-1 and Lys-238. The acyl modifications, in decreasing order of ion abundance, are: oleoyl (C18:1) &gt; palmitoyl (C16:0) &gt; stearoyl (C18:0) &gt; eicosenoyl (C20:1) &gt; dihomo-gamma-linolenoyl (C20:3) &gt; palmitoleoyl (C16:1) &gt; eicosadienoyl (C20:2). Detected in eye lens (at protein level).

Its subcellular location is the cell membrane. The protein localises to the cell junction. It carries out the reaction H2O(in) = H2O(out). Its activity is regulated as follows. The water channel activity is inhibited by calcium through calmodulin/CALM. Functionally, aquaporins form homotetrameric transmembrane channels, with each monomer independently mediating water transport across the plasma membrane along its osmotic gradient. Specifically expressed in lens fiber cells, this aquaporin is crucial for maintaining lens water homeostasis and transparency. Beyond water permeability, it also acts as a cell-to-cell adhesion molecule, forming thin junctions between lens fiber cells that are essential for maintaining the ordered structure and transparency of the lens. The sequence is that of Lens fiber major intrinsic protein from Ovis aries (Sheep).